Here is a 320-residue protein sequence, read N- to C-terminus: MVKATKAEKKIAYDTKLCQLIDEYTQILVVAADNVGSTQLQNIRKGLRGDSVVLMGKNTMMKRSVRIHSENTGNTAILNLLPLLQGNVGLIFTKGDLKEVSEEVAKYKVGAPARVGLVAPIDVVVQPGNTGLDPSQTSFFQVLNIPTKINKGTVEIITPVELIKQGDKVGSSEAALLAKLGIRPFSYGLVVQSVYDNGSVFSPEVLDLTEDQLVEKFASGISMVTSLALAVSYPTLAAAPHMFINAYKNALAIAVATEYTFPQAEKVKEYLKDPSKFAVASVAAVSADAGGGAPAAAKVEEKEESDEEDYGGDFGLFDEE.

The disordered stretch occupies residues 289-320 (AGGGAPAAAKVEEKEESDEEDYGGDFGLFDEE). Acidic residues predominate over residues 302–320 (KEESDEEDYGGDFGLFDEE). Ser305 carries the phosphoserine modification. Phosphotyrosine is present on Tyr310.

Belongs to the universal ribosomal protein uL10 family. In terms of assembly, P0 forms a pentameric complex by interaction with dimers of P1 and P2.

In terms of biological role, ribosomal protein P0 is the functional equivalent of E.coli protein L10. The chain is Large ribosomal subunit protein uL10y (RPP0B) from Arabidopsis thaliana (Mouse-ear cress).